The following is an 89-amino-acid chain: Small ribosomal subunit protein uS15 (89 aa).

Positions Met-1–Asp-21 are enriched in basic and acidic residues. The interval Met-1 to Glu-26 is disordered.

Belongs to the universal ribosomal protein uS15 family. As to quaternary structure, part of the 30S ribosomal subunit. Forms a bridge to the 50S subunit in the 70S ribosome, contacting the 23S rRNA.

Its function is as follows. One of the primary rRNA binding proteins, it binds directly to 16S rRNA where it helps nucleate assembly of the platform of the 30S subunit by binding and bridging several RNA helices of the 16S rRNA. Forms an intersubunit bridge (bridge B4) with the 23S rRNA of the 50S subunit in the ribosome. The polypeptide is Small ribosomal subunit protein uS15 (Sphingopyxis alaskensis (strain DSM 13593 / LMG 18877 / RB2256) (Sphingomonas alaskensis)).